A 1041-amino-acid chain; its full sequence is Isoleucine--tRNA ligase (1041 aa).

The 'HIGH' region motif lies at 53–63 (PFANGLPHYGH). The short motif at 619-623 (KMSKS) is the 'KMSKS' region element. Lys-622 is a binding site for ATP.

Belongs to the class-I aminoacyl-tRNA synthetase family. IleS type 2 subfamily. Monomer. Requires Zn(2+) as cofactor.

It localises to the cytoplasm. It carries out the reaction tRNA(Ile) + L-isoleucine + ATP = L-isoleucyl-tRNA(Ile) + AMP + diphosphate. Catalyzes the attachment of isoleucine to tRNA(Ile). As IleRS can inadvertently accommodate and process structurally similar amino acids such as valine, to avoid such errors it has two additional distinct tRNA(Ile)-dependent editing activities. One activity is designated as 'pretransfer' editing and involves the hydrolysis of activated Val-AMP. The other activity is designated 'posttransfer' editing and involves deacylation of mischarged Val-tRNA(Ile). The sequence is that of Isoleucine--tRNA ligase from Mycobacterium bovis (strain ATCC BAA-935 / AF2122/97).